A 169-amino-acid polypeptide reads, in one-letter code: N5-carboxyaminoimidazole ribonucleotide mutase (169 aa).

Substrate is bound by residues Ser16, Asp19, and Arg46.

It belongs to the AIR carboxylase family. Class I subfamily.

It carries out the reaction 5-carboxyamino-1-(5-phospho-D-ribosyl)imidazole + H(+) = 5-amino-1-(5-phospho-D-ribosyl)imidazole-4-carboxylate. Its pathway is purine metabolism; IMP biosynthesis via de novo pathway; 5-amino-1-(5-phospho-D-ribosyl)imidazole-4-carboxylate from 5-amino-1-(5-phospho-D-ribosyl)imidazole (N5-CAIR route): step 2/2. Functionally, catalyzes the conversion of N5-carboxyaminoimidazole ribonucleotide (N5-CAIR) to 4-carboxy-5-aminoimidazole ribonucleotide (CAIR). The sequence is that of N5-carboxyaminoimidazole ribonucleotide mutase from Escherichia coli O157:H7.